Consider the following 92-residue polypeptide: Acyl carrier protein AcpXL (92 aa).

A Carrier domain is found at 2 to 88; the sequence is TATFDKVADI…NLCAKIDELK (87 aa). S37 bears the O-(pantetheine 4'-phosphoryl)serine mark.

In terms of processing, 4'-phosphopantetheine is transferred from CoA to a specific serine of apo-ACP by AcpS. This modification is essential for activity because fatty acids are bound in thioester linkage to the sulfhydryl of the prosthetic group.

The protein resides in the cytoplasm. Its pathway is glycolipid biosynthesis; KDO(2)-lipid A biosynthesis. Carrier of the growing fatty acid chain in fatty acid biosynthesis. Is involved in the transfer of long hydroxylated fatty acids to lipid A. Is acylated predominantly with 27-hydroxyoctacosanoic acid. This Rhizobium etli (strain ATCC 51251 / DSM 11541 / JCM 21823 / NBRC 15573 / CFN 42) protein is Acyl carrier protein AcpXL (acpXL).